A 92-amino-acid chain; its full sequence is Dolichol-phosphate mannosyltransferase subunit 3 (92 aa).

The next 2 helical transmembrane spans lie at 8-28 (LWGL…ALGL) and 37-57 (VLWP…LGTV).

Belongs to the DPM3 family. In terms of assembly, component of the dolichol-phosphate mannose (DPM) synthase complex composed of DPM1, DPM2 and DPM3; within the complex, associates with DPM1 via its C-terminal domain and with DPM2 via its N-terminal portion. This interaction stabilizes DPM1 protein.

The protein localises to the endoplasmic reticulum membrane. The protein operates within protein modification; protein glycosylation. Functionally, stabilizer subunit of the dolichol-phosphate mannose (DPM) synthase complex; tethers catalytic subunit DPM1 to the endoplasmic reticulum. This Homo sapiens (Human) protein is Dolichol-phosphate mannosyltransferase subunit 3 (DPM3).